Here is a 172-residue protein sequence, read N- to C-terminus: Shikimate kinase (172 aa).

8–15 is an ATP binding site; it reads GARASGKT.

Belongs to the shikimate kinase family.

The protein resides in the cytoplasm. The catalysed reaction is shikimate + ATP = 3-phosphoshikimate + ADP + H(+). It participates in metabolic intermediate biosynthesis; chorismate biosynthesis; chorismate from D-erythrose 4-phosphate and phosphoenolpyruvate: step 5/7. The sequence is that of Shikimate kinase from Oleidesulfovibrio alaskensis (strain ATCC BAA-1058 / DSM 17464 / G20) (Desulfovibrio alaskensis).